A 496-amino-acid chain; its full sequence is Probable cytosol aminopeptidase (496 aa).

2 residues coordinate Mn(2+): Lys-266 and Asp-271. Lys-278 is a catalytic residue. Mn(2+)-binding residues include Asp-289, Asp-348, and Glu-350. Arg-352 is a catalytic residue.

It belongs to the peptidase M17 family. The cofactor is Mn(2+).

Its subcellular location is the cytoplasm. The catalysed reaction is Release of an N-terminal amino acid, Xaa-|-Yaa-, in which Xaa is preferably Leu, but may be other amino acids including Pro although not Arg or Lys, and Yaa may be Pro. Amino acid amides and methyl esters are also readily hydrolyzed, but rates on arylamides are exceedingly low.. It carries out the reaction Release of an N-terminal amino acid, preferentially leucine, but not glutamic or aspartic acids.. In terms of biological role, presumably involved in the processing and regular turnover of intracellular proteins. Catalyzes the removal of unsubstituted N-terminal amino acids from various peptides. The polypeptide is Probable cytosol aminopeptidase (Pseudomonas fluorescens (strain SBW25)).